The primary structure comprises 364 residues: MERLTVTLGERSYPITIAAGLFNDPASFLPLKSGDQAMLVTNETLAPLYLDTVRSVLEQAGVNVDSVILPDGEQYKSLAVMDTVFTALLQKPHGRDTTLVALGGGVIGDLTGFAAASYQRGVRFIQVPTTLLSQVDSSVGGKTAVNHPLGKNMIGAFWQPVSVVVDLNCLKTLPARELASGLAEVIKYGVILDGEFFSWLENNIDALLALDEKAMAYCIRRCCELKAEVVAADERETGLRALLNLGHTFGHAIEAEMGYGNWLHGEAVAAGMVMAAHTSERLGQFRAQDTQRIIDLLKRAGLPVRGPQEMSAQAYLPHMMRDKKVLAGDMRLVLPLAIGSSELRGGVPHDVVLGAIADTQQAQQ.

Residues 71–76 (DGEQYK), 105–109 (GVIGD), 129–130 (TT), Lys-142, Lys-151, and 169–172 (CLKT) each bind NAD(+). 3 residues coordinate Zn(2+): Glu-184, His-247, and His-264.

Belongs to the sugar phosphate cyclases superfamily. Dehydroquinate synthase family. Co(2+) is required as a cofactor. Zn(2+) serves as cofactor. It depends on NAD(+) as a cofactor.

It is found in the cytoplasm. It catalyses the reaction 7-phospho-2-dehydro-3-deoxy-D-arabino-heptonate = 3-dehydroquinate + phosphate. It functions in the pathway metabolic intermediate biosynthesis; chorismate biosynthesis; chorismate from D-erythrose 4-phosphate and phosphoenolpyruvate: step 2/7. In terms of biological role, catalyzes the conversion of 3-deoxy-D-arabino-heptulosonate 7-phosphate (DAHP) to dehydroquinate (DHQ). This Klebsiella pneumoniae (strain 342) protein is 3-dehydroquinate synthase.